A 162-amino-acid chain; its full sequence is NADH-quinone oxidoreductase subunit I (162 aa).

2 consecutive 4Fe-4S ferredoxin-type domains span residues 53-83 and 93-122; these read LRRYPNGEERCIACKLCEAVCPAQAITIEAE and TRYDIDMTKCIYCGFCQEACPVDAIVEGPN. C63, C66, C69, C73, C102, C105, C108, and C112 together coordinate [4Fe-4S] cluster.

Belongs to the complex I 23 kDa subunit family. As to quaternary structure, NDH-1 is composed of 14 different subunits. Subunits NuoA, H, J, K, L, M, N constitute the membrane sector of the complex. The cofactor is [4Fe-4S] cluster.

Its subcellular location is the cell inner membrane. It carries out the reaction a quinone + NADH + 5 H(+)(in) = a quinol + NAD(+) + 4 H(+)(out). NDH-1 shuttles electrons from NADH, via FMN and iron-sulfur (Fe-S) centers, to quinones in the respiratory chain. The immediate electron acceptor for the enzyme in this species is believed to be ubiquinone. Couples the redox reaction to proton translocation (for every two electrons transferred, four hydrogen ions are translocated across the cytoplasmic membrane), and thus conserves the redox energy in a proton gradient. This Sphingopyxis alaskensis (strain DSM 13593 / LMG 18877 / RB2256) (Sphingomonas alaskensis) protein is NADH-quinone oxidoreductase subunit I.